The sequence spans 172 residues: 3-hydroxydecanoyl-[acyl-carrier-protein] dehydratase (172 aa).

The active site involves His-71.

Belongs to the thioester dehydratase family. FabA subfamily. In terms of assembly, homodimer.

Its subcellular location is the cytoplasm. It catalyses the reaction a (3R)-hydroxyacyl-[ACP] = a (2E)-enoyl-[ACP] + H2O. It carries out the reaction (3R)-hydroxydecanoyl-[ACP] = (2E)-decenoyl-[ACP] + H2O. The catalysed reaction is (2E)-decenoyl-[ACP] = (3Z)-decenoyl-[ACP]. It functions in the pathway lipid metabolism; fatty acid biosynthesis. Its function is as follows. Necessary for the introduction of cis unsaturation into fatty acids. Catalyzes the dehydration of (3R)-3-hydroxydecanoyl-ACP to E-(2)-decenoyl-ACP and then its isomerization to Z-(3)-decenoyl-ACP. Can catalyze the dehydratase reaction for beta-hydroxyacyl-ACPs with saturated chain lengths up to 16:0, being most active on intermediate chain length. This chain is 3-hydroxydecanoyl-[acyl-carrier-protein] dehydratase, found in Klebsiella pneumoniae (strain 342).